The primary structure comprises 78 residues: Large ribosomal subunit protein bL28 (78 aa).

Residues 1 to 23 are disordered; the sequence is MSRKCQITGKKANNAMAVSHSHR.

Belongs to the bacterial ribosomal protein bL28 family.

In Picosynechococcus sp. (strain ATCC 27264 / PCC 7002 / PR-6) (Agmenellum quadruplicatum), this protein is Large ribosomal subunit protein bL28.